The following is a 611-amino-acid chain: Translation initiation factor RLI1 (611 aa).

4Fe-4S ferredoxin-type domains lie at 7-31 and 46-75; these read RVAI…SCPV and RIAF…IINL. 2 consecutive ABC transporter domains span residues 77–318 and 345–565; these read TNLE…FLDG and AEKS…LKNL. Residues 110–117 and 382–389 each bind ATP; these read GTNGIGKS and GENGTGKT.

The protein belongs to the ABC transporter superfamily. ABCE family. Component of the multifactor complex (MFC). The complex associates with pre-initiation complexes.

The protein resides in the cytoplasm. Its subcellular location is the nucleus. Its function is as follows. Component of the multifactor complex (MFC) involved in translation initiation. Required for the binding of MFC to the 40S ribosome. Required for the processing and nuclear export of the 60S and 40S ribosomal subunits. The chain is Translation initiation factor RLI1 (RLI1) from Chaetomium thermophilum (strain DSM 1495 / CBS 144.50 / IMI 039719) (Thermochaetoides thermophila).